The primary structure comprises 579 residues: Maintenance of mitochondrial morphology protein 1 (579 aa).

Residues 1–43 (MQQPQQQDLQIGLPYAPVQPPIPSPAAYFAYLPSPSRWTFTQG) are Lumenal-facing. A helical transmembrane segment spans residues 44-64 (LIVGQVSMVIVALLLIRYVIF). At 65–579 (EDSATALEKE…GLRNRPGFVQ (515 aa)) the chain is on the cytoplasmic side. One can recognise an SMP-LTD domain in the interval 150 to 391 (LPESADWLNV…WPRYWSLTLP (242 aa)). 3 disordered regions span residues 309 to 332 (VLPT…RSRH), 460 to 479 (RPSL…SGLR), and 558 to 579 (SSVL…GFVQ). 2 stretches are compositionally biased toward low complexity: residues 311–328 (PTAN…ATPP) and 465–476 (SSRPPHVRSSSS).

The protein belongs to the MMM1 family. In terms of assembly, homodimer. Component of the ER-mitochondria encounter structure (ERMES) or MDM complex, composed of MMM1, MDM10, MDM12 and MDM34. An MMM1 homodimer associates with one molecule of MDM12 on each side in a pairwise head-to-tail manner, and the SMP-LTD domains of MMM1 and MDM12 generate a continuous hydrophobic tunnel for phospholipid trafficking.

Its subcellular location is the endoplasmic reticulum membrane. Functionally, component of the ERMES/MDM complex, which serves as a molecular tether to connect the endoplasmic reticulum (ER) and mitochondria. Components of this complex are involved in the control of mitochondrial shape and protein biogenesis, and function in nonvesicular lipid trafficking between the ER and mitochondria. The MDM12-MMM1 subcomplex functions in the major beta-barrel assembly pathway that is responsible for biogenesis of all outer membrane beta-barrel proteins, and acts in a late step after the SAM complex. The MDM10-MDM12-MMM1 subcomplex further acts in the TOM40-specific pathway after the action of the MDM12-MMM1 complex. Essential for establishing and maintaining the structure of mitochondria and maintenance of mtDNA nucleoids. The protein is Maintenance of mitochondrial morphology protein 1 of Mycosarcoma maydis (Corn smut fungus).